The primary structure comprises 126 residues: Large ribosomal subunit protein eL32 (126 aa).

The protein belongs to the eukaryotic ribosomal protein eL32 family.

The protein is Large ribosomal subunit protein eL32 of Thermococcus onnurineus (strain NA1).